Reading from the N-terminus, the 243-residue chain is 2-C-methyl-D-erythritol 4-phosphate cytidylyltransferase (243 aa).

This sequence belongs to the IspD/TarI cytidylyltransferase family. IspD subfamily.

It catalyses the reaction 2-C-methyl-D-erythritol 4-phosphate + CTP + H(+) = 4-CDP-2-C-methyl-D-erythritol + diphosphate. It functions in the pathway isoprenoid biosynthesis; isopentenyl diphosphate biosynthesis via DXP pathway; isopentenyl diphosphate from 1-deoxy-D-xylulose 5-phosphate: step 2/6. In terms of biological role, catalyzes the formation of 4-diphosphocytidyl-2-C-methyl-D-erythritol from CTP and 2-C-methyl-D-erythritol 4-phosphate (MEP). This chain is 2-C-methyl-D-erythritol 4-phosphate cytidylyltransferase, found in Colwellia psychrerythraea (strain 34H / ATCC BAA-681) (Vibrio psychroerythus).